The sequence spans 460 residues: GTPase Der (460 aa).

2 consecutive EngA-type G domains span residues F3–D167 and I189–N364. Residues G9–S16, D56–L60, N119–E122, G195–S202, D242–L246, and N307–D310 each bind GTP. A KH-like domain is found at R365–A449.

It belongs to the TRAFAC class TrmE-Era-EngA-EngB-Septin-like GTPase superfamily. EngA (Der) GTPase family. As to quaternary structure, associates with the 50S ribosomal subunit.

Its function is as follows. GTPase that plays an essential role in the late steps of ribosome biogenesis. The sequence is that of GTPase Der from Rhodopseudomonas palustris (strain BisA53).